The chain runs to 464 residues: Forkhead box protein N3 (464 aa).

2 disordered regions span residues 1 to 53 (MGPI…EKGG) and 85 to 108 (PVQDIDDDTPPSPAQSDMPYDAKQ). Residues 14–30 (TGISVSSQCYRSSTLSN) show a composition bias toward polar residues. Residues 113 to 209 (KPPYSFSCLI…QALKKTPYHP (97 aa)) constitute a DNA-binding region (fork-head). Disordered regions lie at residues 294–337 (MESE…SSSA) and 381–428 (LVES…MKEA). Residues 316–336 (SSAKSANKRSSSPSDSISSSS) are compositionally biased toward low complexity. Residues 389–401 (QHKKKQHLLKLRR) are compositionally biased toward basic residues.

It localises to the nucleus. In terms of biological role, acts as a transcriptional repressor. May be involved in DNA damage-inducible cell cycle arrests (checkpoints). The sequence is that of Forkhead box protein N3 from Xenopus tropicalis (Western clawed frog).